Reading from the N-terminus, the 164-residue chain is Protein SprT (164 aa).

One can recognise a SprT-like domain in the interval 14–156 (QQAETFFKRP…LCRRCREILV (143 aa)). His-69 is a Zn(2+) binding site. Residue Glu-70 is part of the active site. Residue His-73 coordinates Zn(2+).

This sequence belongs to the SprT family. The cofactor is Zn(2+).

It is found in the cytoplasm. The protein is Protein SprT of Pseudomonas entomophila (strain L48).